Reading from the N-terminus, the 277-residue chain is C2H2-type zinc-finger transcription factor (277 aa).

Disordered regions lie at residues 23–66 (PTMN…AHPP) and 78–146 (MNEP…TDSI). Residues 27–37 (EIETTDNTYPR) show a composition bias toward polar residues. The C2H2-type; degenerate zinc finger occupies 185–208 (HPCPDCGRVFTRSTARNFHRQSGT).

It belongs to the GLI C2H2-type zinc-finger protein family.

It localises to the nucleus. In terms of biological role, C2H2-type zinc-finger transcription factor that controls the expression of the nonribosomal peptide synthases inpA and inpB, as well as of the other inp cluster-associated genes. Also mediates the expression of the asperfuranone biosynthesis gene cluster by binding to the afoA promoter. Probably recognizes the 5'-CT/C/AAAAGGAT/AT/GG/CA-3' motif in the promoters of teget genes. This Emericella nidulans (strain FGSC A4 / ATCC 38163 / CBS 112.46 / NRRL 194 / M139) (Aspergillus nidulans) protein is C2H2-type zinc-finger transcription factor.